Here is a 109-residue protein sequence, read N- to C-terminus: Mitochondrial import receptor subunit TOM22 homolog (109 aa).

Over 1–60 the chain is Cytoplasmic; sequence MALVRDDFDDIPDSEIHETIVERIEGLGEMFPDALRSAVHSTVDWSIWGVKGVFSLTKST. A helical membrane pass occupies residues 61 to 77; sequence IWVVSTTSLIAFLPYII. Residues 78–109 lie on the Mitochondrial intermembrane side of the membrane; the sequence is EKERSDLEKTQVAQQRQMLLGPSAAIQQAKTA.

This sequence belongs to the Tom22 family. Forms part of the preprotein translocase complex of the outer mitochondrial membrane (TOM complex).

It localises to the mitochondrion outer membrane. Central receptor component of the translocase of the outer membrane of mitochondria (TOM complex) responsible for the recognition and translocation of cytosolically synthesized mitochondrial preproteins. Together with the peripheral receptor tomm-20 functions as the transit peptide receptor and facilitates the movement of preproteins into the translocation pore. This chain is Mitochondrial import receptor subunit TOM22 homolog, found in Caenorhabditis elegans.